Reading from the N-terminus, the 391-residue chain is Histidinol-phosphate aminotransferase (391 aa).

Lys248 bears the N6-(pyridoxal phosphate)lysine mark.

Belongs to the class-II pyridoxal-phosphate-dependent aminotransferase family. Histidinol-phosphate aminotransferase subfamily. As to quaternary structure, homodimer. The cofactor is pyridoxal 5'-phosphate.

The catalysed reaction is L-histidinol phosphate + 2-oxoglutarate = 3-(imidazol-4-yl)-2-oxopropyl phosphate + L-glutamate. It functions in the pathway amino-acid biosynthesis; L-histidine biosynthesis; L-histidine from 5-phospho-alpha-D-ribose 1-diphosphate: step 7/9. This is Histidinol-phosphate aminotransferase from Shewanella oneidensis (strain ATCC 700550 / JCM 31522 / CIP 106686 / LMG 19005 / NCIMB 14063 / MR-1).